The following is a 1611-amino-acid chain: SH3 domain-containing protein C23A1.17 (1611 aa).

The 65-residue stretch at 3-67 (SFPTRVVALY…PKDFTEPAED (65 aa)) folds into the SH3 domain. Disordered regions lie at residues 275-648 (THPA…PTSL), 662-741 (IDPP…PPGL), 762-851 (AVPR…NSLN), and 886-1365 (TPST…FSAK). The segment covering 278–296 (AASSTMATESSHQSPSADS) has biased composition (polar residues). The span at 300–312 (ELSKSQRVAKDDD) shows a compositional bias: basic and acidic residues. A compositionally biased stretch (polar residues) spans 316–330 (VSNTANSDEPASSSK). Acidic residues-rich tracts occupy residues 361–373 (SEQE…DAES) and 387–420 (SEPE…QIDP). Over residues 421 to 433 (EEAKRIALRERMA) the composition is skewed to basic and acidic residues. Over residues 472–494 (STTNDSSPPKDSSSTSTQPTEQS) the composition is skewed to low complexity. A compositionally biased stretch (polar residues) spans 576-586 (TQETSEQQVHK). The segment covering 605–619 (FDKETLASNEAHEAV) has biased composition (basic and acidic residues). The span at 637 to 648 (SSSVVTPSPTSL) shows a compositional bias: low complexity. 3 stretches are compositionally biased toward polar residues: residues 799-808 (SRPSTGSQLR), 886-902 (TPST…SNVA), and 923-940 (ATHQ…QLGS). Pro residues-rich tracts occupy residues 963–974 (PAAPPSIPPPLP), 1022–1053 (PPVP…PPVP), and 1076–1241 (IPAP…PVPA). Residues 1242–1278 (PSSEAPSVSTPRSSVPSPHSNASPSPTSSSMASAAPA) are compositionally biased toward low complexity. Phosphoserine occurs at positions 1258, 1261, and 1266. Residues 1300–1312 (KSSKSGEHHHHHN) are compositionally biased toward basic residues. A compositionally biased stretch (polar residues) spans 1317–1327 (DSSSTRTSLAH). Residues 1340 to 1350 (RSSSRASKKPS) are compositionally biased toward low complexity. Positions 1351 to 1362 (IVSTTGPFNESF) are enriched in polar residues. Phosphoserine is present on serine 1379. Threonine 1380 carries the phosphothreonine modification.

It is found in the cytoplasm. This chain is SH3 domain-containing protein C23A1.17, found in Schizosaccharomyces pombe (strain 972 / ATCC 24843) (Fission yeast).